The primary structure comprises 370 residues: Dihydroorotate dehydrogenase (quinone) (370 aa).

Residues 80–84 and threonine 104 contribute to the FMN site; that span reads AGFDK. Lysine 84 is a substrate binding site. 129–133 provides a ligand contact to substrate; sequence NRMGF. Residues asparagine 157 and asparagine 190 each coordinate FMN. Asparagine 190 lines the substrate pocket. Residue serine 193 is the Nucleophile of the active site. Substrate is bound at residue asparagine 195. Residues lysine 226 and threonine 254 each coordinate FMN. 255–256 contributes to the substrate binding site; sequence NT. Residues glycine 278, glycine 307, and 328-329 each bind FMN; that span reads YT.

The protein belongs to the dihydroorotate dehydrogenase family. Type 2 subfamily. In terms of assembly, monomer. It depends on FMN as a cofactor.

Its subcellular location is the cell membrane. It carries out the reaction (S)-dihydroorotate + a quinone = orotate + a quinol. The protein operates within pyrimidine metabolism; UMP biosynthesis via de novo pathway; orotate from (S)-dihydroorotate (quinone route): step 1/1. Catalyzes the conversion of dihydroorotate to orotate with quinone as electron acceptor. The polypeptide is Dihydroorotate dehydrogenase (quinone) (Mycolicibacterium paratuberculosis (strain ATCC BAA-968 / K-10) (Mycobacterium paratuberculosis)).